Here is a 121-residue protein sequence, read N- to C-terminus: Large ribosomal subunit protein bL17 (121 aa).

The protein belongs to the bacterial ribosomal protein bL17 family. As to quaternary structure, part of the 50S ribosomal subunit. Contacts protein L32.

In Metamycoplasma arthritidis (strain 158L3-1) (Mycoplasma arthritidis), this protein is Large ribosomal subunit protein bL17.